The chain runs to 540 residues: Coatomer subunit delta (540 aa).

Positions 169–263 are disordered; sequence RHEEMLRGKR…GMILGGKSGT (95 aa). The span at 179–197 shows a compositional bias: gly residues; it reads SGGYTGISGGGGMGSGGMG. Residues 212-229 are compositionally biased toward low complexity; sequence NNNNNNNNNNNNNNNNNN. The span at 238–250 shows a compositional bias: polar residues; sequence SPNTSRPSAASSG. Positions 251–261 are enriched in gly residues; the sequence is SQGGMILGGKS. The MHD domain occupies 304–540; the sequence is QEGVHITVEE…TLSVDTYEIK (237 aa).

This sequence belongs to the adaptor complexes medium subunit family. Delta-COP subfamily. In terms of assembly, oligomeric complex that consists of at least the alpha, beta, beta', gamma, delta, epsilon and zeta subunits.

The protein resides in the cytoplasm. The protein localises to the golgi apparatus membrane. It localises to the cytoplasmic vesicle. Its subcellular location is the COPI-coated vesicle membrane. Its function is as follows. The coatomer is a cytosolic protein complex that binds to dilysine motifs and reversibly associates with Golgi non-clathrin-coated vesicles, which further mediate biosynthetic protein transport from the ER, via the Golgi up to the trans Golgi network. Coatomer complex is required for budding from Golgi membranes, and is essential for the retrograde Golgi-to-ER transport of dilysine-tagged proteins. This is Coatomer subunit delta (copd) from Dictyostelium discoideum (Social amoeba).